Consider the following 105-residue polypeptide: MNDFFSVEPNYYLVLAAVLFTIGAAGVLVRRNAIVLFMCVELMLNAANLTLVTFSRINGDLNGQIIAFFVMVVAAAEVVVGLAIIMAIFRTRRSASVDDANLLKY.

3 helical membrane passes run 9 to 29 (PNYYLVLAAVLFTIGAAGVLV), 34 to 54 (IVLFMCVELMLNAANLTLVTF), and 65 to 85 (IIAFFVMVVAAAEVVVGLAII).

Belongs to the complex I subunit 4L family. NDH-1 is composed of 14 different subunits. Subunits NuoA, H, J, K, L, M, N constitute the membrane sector of the complex.

The protein resides in the cell membrane. The enzyme catalyses a quinone + NADH + 5 H(+)(in) = a quinol + NAD(+) + 4 H(+)(out). Its function is as follows. NDH-1 shuttles electrons from NADH, via FMN and iron-sulfur (Fe-S) centers, to quinones in the respiratory chain. The immediate electron acceptor for the enzyme in this species is believed to be a menaquinone. Couples the redox reaction to proton translocation (for every two electrons transferred, four hydrogen ions are translocated across the cytoplasmic membrane), and thus conserves the redox energy in a proton gradient. The sequence is that of NADH-quinone oxidoreductase subunit K from Salinispora arenicola (strain CNS-205).